Consider the following 475-residue polypeptide: Cytosolic non-specific dipeptidase (475 aa).

Position 2 is an N-acetylalanine (alanine 2). Lysine 9 is modified (N6-acetyllysine). At serine 58 the chain carries Phosphoserine. Position 99 (histidine 99) interacts with Mn(2+). Residue aspartate 101 is part of the active site. Residue aspartate 132 coordinates Mn(2+). Catalysis depends on glutamate 166, which acts as the Proton acceptor. Residues 166–167 (EE), aspartate 195, and histidine 228 contribute to the substrate site. The Mn(2+) site is built by glutamate 167 and aspartate 195. Serine 299 is subject to Phosphoserine. 4 residues coordinate substrate: threonine 330, arginine 343, serine 417, and histidine 445. Histidine 445 serves as a coordination point for Mn(2+).

This sequence belongs to the peptidase M20A family. As to quaternary structure, homodimer. Mn(2+) is required as a cofactor.

The protein resides in the cytoplasm. The catalysed reaction is Hydrolysis of dipeptides, preferentially hydrophobic dipeptides including prolyl amino acids.. It carries out the reaction L-threonyl-L-threonine + H2O = 2 L-threonine. It catalyses the reaction L-threonyl-L-serine + H2O = L-threonine + L-serine. The enzyme catalyses L-seryl-L-threonine + H2O = L-threonine + L-serine. The catalysed reaction is L-cysteinylglycine + H2O = L-cysteine + glycine. It carries out the reaction (S)-lactate + L-phenylalanine = N-[(S)-lactoyl]-L-phenylalanine + H2O. Functionally, catalyzes the peptide bond hydrolysis in dipeptides, displaying a non-redundant activity toward threonyl dipeptides. Mediates threonyl dipeptide catabolism in a tissue-specific way. Has high dipeptidase activity toward cysteinylglycine, an intermediate metabolite in glutathione metabolism. Metabolizes N-lactoyl-amino acids, both through hydrolysis to form lactic acid and amino acids, as well as through their formation by reverse proteolysis. Plays a role in the regulation of cell cycle arrest and apoptosis. In Pongo abelii (Sumatran orangutan), this protein is Cytosolic non-specific dipeptidase (CNDP2).